A 260-amino-acid chain; its full sequence is MKEGKHFVLVHGACHGGWSWYKLKPLLEAAGHKVTALDLAASGTDLRKIEELRTLYDYTLPLMELMESLSADEKVILVGHSLGGMNLGLAMEKYPQKIYAAVFLAAFMPDSVHNSSFVLEQYNERTPAENWLDTQFLPYGSPEEPLTSMFFGPKFLAHKLYQLCSPEDLALASSLVRPSSLFMEDLSKAKYFTDERFGSVKRVYIVCTEDKGIPEEFQRWQIDNIGVTEAIEIKGADHMAMLCEPQKLCASLLEIAHKYN.

The salicylate site is built by A13, S81, and K159. The Acyl-ester intermediate role is filled by S81. Catalysis depends on charge relay system residues D210 and H238. Salicylate contacts are provided by H238, L253, and H257.

It belongs to the AB hydrolase superfamily. Methylesterase family.

The enzyme catalyses methyl salicylate + H2O = salicylate + methanol + H(+). It participates in plant hormone biosynthesis. Esterase activity is down-regulated by salicylic acid (SA) or by tetraFA, a synthetic SA analog. Required to convert methyl salicylate (MeSA) to salicylic acid (SA) as part of the signal transduction pathways that activate systemic acquired resistance in systemic tissue. MeSA is believed to be an inactive form that needs to be demethylated to exert a biological effect. Also able to catalyze the conversion of acibenzolar-S-methyl into acibenzolar to induce systemic acquired resistance. This chain is Salicylic acid-binding protein 2, found in Nicotiana tabacum (Common tobacco).